We begin with the raw amino-acid sequence, 493 residues long: 3-octaprenyl-4-hydroxybenzoate carboxy-lyase (493 aa).

Asparagine 177 is a Mn(2+) binding site. Residues isoleucine 180 to arginine 182, arginine 194 to leucine 196, and arginine 199 to glycine 200 contribute to the prenylated FMN site. Glutamate 243 lines the Mn(2+) pocket. Residue aspartate 292 is the Proton donor of the active site.

This sequence belongs to the UbiD family. As to quaternary structure, homohexamer. Prenylated FMN serves as cofactor. Requires Mn(2+) as cofactor.

It localises to the cell membrane. The enzyme catalyses a 4-hydroxy-3-(all-trans-polyprenyl)benzoate + H(+) = a 2-(all-trans-polyprenyl)phenol + CO2. It participates in cofactor biosynthesis; ubiquinone biosynthesis. In terms of biological role, catalyzes the decarboxylation of 3-octaprenyl-4-hydroxy benzoate to 2-octaprenylphenol, an intermediate step in ubiquinone biosynthesis. The chain is 3-octaprenyl-4-hydroxybenzoate carboxy-lyase from Colwellia psychrerythraea (strain 34H / ATCC BAA-681) (Vibrio psychroerythus).